We begin with the raw amino-acid sequence, 352 residues long: DNA integrity scanning protein DisA (352 aa).

One can recognise a DAC domain in the interval 3–143; it reads PQELIEKIKL…NYKYVVNQVD (141 aa). ATP contacts are provided by residues Gly71, Leu89, and 102–106; that span reads TRHRT.

The protein belongs to the DisA family. Homooctamer. Mg(2+) is required as a cofactor.

The catalysed reaction is 2 ATP = 3',3'-c-di-AMP + 2 diphosphate. In terms of biological role, participates in a DNA-damage check-point. DisA forms globular foci that rapidly scan along the chromosomes searching for lesions. Its function is as follows. Also has diadenylate cyclase activity, catalyzing the condensation of 2 ATP molecules into cyclic di-AMP (c-di-AMP). c-di-AMP likely acts as a signaling molecule that may couple DNA integrity with a cellular process. This chain is DNA integrity scanning protein DisA, found in Thermotoga neapolitana (strain ATCC 49049 / DSM 4359 / NBRC 107923 / NS-E).